A 116-amino-acid polypeptide reads, in one-letter code: Evasin P1180 (116 aa).

The N-terminal stretch at 1-25 is a signal peptide; it reads MARNWSFRVIFVSAMWCALLKFATL. 4 cysteine pairs are disulfide-bonded: Cys-38–Cys-58, Cys-54–Cys-95, Cys-71–Cys-100, and Cys-90–Cys-109. Residues Asn-45, Asn-73, and Asn-104 are each glycosylated (N-linked (GlcNAc...) asparagine).

Its subcellular location is the secreted. Its function is as follows. Salivary chemokine-binding protein which binds to host chemokines CCL2, CCL3, CCL4, CCL8 and CCL18. This is Evasin P1180 from Amblyomma triste (Neotropical tick).